We begin with the raw amino-acid sequence, 401 residues long: Adaptive-response sensory kinase SasA (401 aa).

Positions 175-400 (MLVHDLRNPL…WFHFTLPVYP (226 aa)) constitute a Histidine kinase domain. A Phosphohistidine; by autocatalysis modification is found at His-178.

As to quaternary structure, homooligomerizes. Interacts with KaiC. Participates in the KaiABC clock complex, whose core is composed of a KaiC homohexamer, 6 KaiB and up to 6 KaiA dimers. SasA and KaiB(fs) compete to bind to KaiC.

The catalysed reaction is ATP + protein L-histidine = ADP + protein N-phospho-L-histidine.. In terms of biological role, member of the two-component regulatory system SasA/RpaA involved in genome-wide circadian gene expression. One of several clock output pathways. Participates in the Kai clock protein complex, the main circadian regulator in cyanobacteria, via its interaction with KaiC. KaiC enhances the autophosphorylation activity of SasA, which then transfers its phosphate group to RpaA to activate it. In addition to its output function, recruits fold-shifted KaiB (KaiB(fs)) to KaiC to cooperatively form the KaiB(6):KaiC(6) complex (independent of SasA kinase activity). Required for robustness of the circadian rhythm of gene expression and is involved in clock output, also required for adaptation to light/dark cycles. The sequence is that of Adaptive-response sensory kinase SasA from Trichormus variabilis (strain ATCC 29413 / PCC 7937) (Anabaena variabilis).